The following is a 205-amino-acid chain: Recombination protein RecR (205 aa).

The C4-type zinc finger occupies 60–75; it reads CKVCHNISDTETCRIC. The region spanning 83 to 178 is the Toprim domain; sequence STICVVESIR…KLSVIARGIS (96 aa).

This sequence belongs to the RecR family.

Functionally, may play a role in DNA repair. It seems to be involved in an RecBC-independent recombinational process of DNA repair. It may act with RecF and RecO. In Phocaeicola vulgatus (strain ATCC 8482 / DSM 1447 / JCM 5826 / CCUG 4940 / NBRC 14291 / NCTC 11154) (Bacteroides vulgatus), this protein is Recombination protein RecR.